We begin with the raw amino-acid sequence, 471 residues long: Heat shock 70 kDa protein 13 (471 aa).

An N-terminal signal peptide occupies residues 1–22 (MAREMTILGSAVLTLLLAGYLA). Residues 314-352 (EEQDRKEPHSSDTELPKDKLSSADDHRVNSGFGRGLSDK) are disordered. Residues 315–341 (EQDRKEPHSSDTELPKDKLSSADDHRV) show a composition bias toward basic and acidic residues.

This sequence belongs to the heat shock protein 70 family. In terms of assembly, binds UBQLN2.

The protein localises to the microsome. It is found in the endoplasmic reticulum. Has peptide-independent ATPase activity. In Pongo abelii (Sumatran orangutan), this protein is Heat shock 70 kDa protein 13 (HSPA13).